We begin with the raw amino-acid sequence, 451 residues long: Probable asparagine--tRNA ligase, cytoplasmic (451 aa).

This sequence belongs to the class-II aminoacyl-tRNA synthetase family.

It is found in the cytoplasm. The catalysed reaction is tRNA(Asn) + L-asparagine + ATP = L-asparaginyl-tRNA(Asn) + AMP + diphosphate + H(+). The sequence is that of Probable asparagine--tRNA ligase, cytoplasmic from Encephalitozoon cuniculi (strain GB-M1) (Microsporidian parasite).